A 199-amino-acid polypeptide reads, in one-letter code: Probable thymidylate kinase (199 aa).

Position 13-20 (13-20 (GIDGAGKT)) interacts with ATP.

It belongs to the thymidylate kinase family.

The catalysed reaction is dTMP + ATP = dTDP + ADP. The chain is Probable thymidylate kinase from Staphylothermus marinus (strain ATCC 43588 / DSM 3639 / JCM 9404 / F1).